A 311-amino-acid polypeptide reads, in one-letter code: ATP synthase subunit gamma, mitochondrial (311 aa).

The N-terminal 33 residues, 1-33, are a transit peptide targeting the mitochondrion; it reads MLSRIVSNNATRSVMCHQAQVGILYKTNPVRTY.

The protein belongs to the ATPase gamma chain family. In terms of assembly, F-type ATPases have 2 components, CF(1) - the catalytic core - and CF(0) - the membrane proton channel. CF(1) has five subunits: alpha(3), beta(3), gamma(1), delta(1), epsilon(1). CF(0) has three main subunits: a, b and c.

It is found in the mitochondrion. The protein resides in the mitochondrion inner membrane. Its function is as follows. Mitochondrial membrane ATP synthase (F(1)F(0) ATP synthase or Complex V) produces ATP from ADP in the presence of a proton gradient across the membrane which is generated by electron transport complexes of the respiratory chain. F-type ATPases consist of two structural domains, F(1) - containing the extramembraneous catalytic core, and F(0) - containing the membrane proton channel, linked together by a central stalk and a peripheral stalk. During catalysis, ATP synthesis in the catalytic domain of F(1) is coupled via a rotary mechanism of the central stalk subunits to proton translocation. Part of the complex F(1) domain and the central stalk which is part of the complex rotary element. The gamma subunit protrudes into the catalytic domain formed of alpha(3)beta(3). Rotation of the central stalk against the surrounding alpha(3)beta(3) subunits leads to hydrolysis of ATP in three separate catalytic sites on the beta subunits. This Saccharomyces cerevisiae (strain ATCC 204508 / S288c) (Baker's yeast) protein is ATP synthase subunit gamma, mitochondrial (ATP3).